A 100-amino-acid chain; its full sequence is NADH-quinone oxidoreductase subunit K (100 aa).

Helical transmembrane passes span 4-24 (LTHGLILAAILFVLGLTGLVI), 28-48 (LLFMLIGLEIMINASALAFVV), and 60-80 (VMYILAISLAAAEASIGLALL).

It belongs to the complex I subunit 4L family. As to quaternary structure, NDH-1 is composed of 13 different subunits. Subunits NuoA, H, J, K, L, M, N constitute the membrane sector of the complex.

The protein localises to the cell inner membrane. The enzyme catalyses a quinone + NADH + 5 H(+)(in) = a quinol + NAD(+) + 4 H(+)(out). NDH-1 shuttles electrons from NADH, via FMN and iron-sulfur (Fe-S) centers, to quinones in the respiratory chain. The immediate electron acceptor for the enzyme in this species is believed to be ubiquinone. Couples the redox reaction to proton translocation (for every two electrons transferred, four hydrogen ions are translocated across the cytoplasmic membrane), and thus conserves the redox energy in a proton gradient. This is NADH-quinone oxidoreductase subunit K from Enterobacter sp. (strain 638).